Here is a 277-residue protein sequence, read N- to C-terminus: Protein CMSS1 (277 aa).

The span at methionine 1–alanine 14 shows a compositional bias: acidic residues. The segment at methionine 1–glutamate 91 is disordered. The span at glutamate 24–glycine 34 shows a compositional bias: basic and acidic residues. Over residues asparagine 35 to glutamate 52 the composition is skewed to basic residues. Over residues valine 53–proline 66 the composition is skewed to basic and acidic residues.

Belongs to the CMS1 family.

This chain is Protein CMSS1 (cmss1), found in Xenopus laevis (African clawed frog).